Here is a 303-residue protein sequence, read N- to C-terminus: Coenzyme PQQ synthesis protein B (303 aa).

It belongs to the PqqB family.

It participates in cofactor biosynthesis; pyrroloquinoline quinone biosynthesis. May be involved in the transport of PQQ or its precursor to the periplasm. The protein is Coenzyme PQQ synthesis protein B of Pseudomonas putida (strain W619).